The chain runs to 510 residues: Light-independent protochlorophyllide reductase subunit B (510 aa).

Asp-36 is a [4Fe-4S] cluster binding site. Residue Asp-296 is the Proton donor of the active site. A substrate-binding site is contributed by 431 to 432 (GM).

It belongs to the ChlB/BchB/BchZ family. Protochlorophyllide reductase is composed of three subunits; ChlL, ChlN and ChlB. Forms a heterotetramer of two ChlB and two ChlN subunits. [4Fe-4S] cluster serves as cofactor.

It is found in the plastid. Its subcellular location is the chloroplast. It carries out the reaction chlorophyllide a + oxidized 2[4Fe-4S]-[ferredoxin] + 2 ADP + 2 phosphate = protochlorophyllide a + reduced 2[4Fe-4S]-[ferredoxin] + 2 ATP + 2 H2O. It participates in porphyrin-containing compound metabolism; chlorophyll biosynthesis (light-independent). Component of the dark-operative protochlorophyllide reductase (DPOR) that uses Mg-ATP and reduced ferredoxin to reduce ring D of protochlorophyllide (Pchlide) to form chlorophyllide a (Chlide). This reaction is light-independent. The NB-protein (ChlN-ChlB) is the catalytic component of the complex. The polypeptide is Light-independent protochlorophyllide reductase subunit B (Angiopteris evecta (Mule's foot fern)).